A 264-amino-acid polypeptide reads, in one-letter code: Undecaprenyl-diphosphatase (264 aa).

7 consecutive transmembrane segments (helical) span residues 42–62 (ESLLFTVVLHFATALSTLVVF), 82–102 (TQFSLKIIISMLPAVIVGLLF), 109–129 (LFGGNILFVGFMLLITALLLW), 146–166 (AFIIGVSQAIAMLPGISRSGA), 184–204 (FSFLMVVPLIFGKIAKDLMSG), 215–235 (ILATGFIAAFLAGLVACTWMI), and 243–263 (LSWFAIYCFVVGLAAIIFAYA).

The protein belongs to the UppP family.

The protein resides in the cell membrane. It catalyses the reaction di-trans,octa-cis-undecaprenyl diphosphate + H2O = di-trans,octa-cis-undecaprenyl phosphate + phosphate + H(+). In terms of biological role, catalyzes the dephosphorylation of undecaprenyl diphosphate (UPP). Confers resistance to bacitracin. The protein is Undecaprenyl-diphosphatase of Christiangramia forsetii (strain DSM 17595 / CGMCC 1.15422 / KT0803) (Gramella forsetii).